A 390-amino-acid chain; its full sequence is uncharacterized protein (390 aa).

Belongs to the arsA ATPase family.

This is an uncharacterized protein from Streptomyces coelicolor (strain ATCC BAA-471 / A3(2) / M145).